The chain runs to 306 residues: Phosphatidate cytidylyltransferase (306 aa).

The interval 1–28 (MTTNDAGTGNPAEQPARGAKQQPATETS) is disordered. 8 helical membrane-spanning segments follow: residues 36-56 (AAIV…VFVP), 82-102 (GYLI…WLTW), 103-123 (PFGA…CMIW), 151-171 (ATVF…MLVY), 180-200 (FCMM…GVLF), 218-238 (FAGS…FLVG), 241-261 (PWIG…GDLV), and 285-305 (MDRL…LTLL).

The protein belongs to the CDS family.

The protein resides in the cell membrane. The enzyme catalyses a 1,2-diacyl-sn-glycero-3-phosphate + CTP + H(+) = a CDP-1,2-diacyl-sn-glycerol + diphosphate. The protein operates within phospholipid metabolism; CDP-diacylglycerol biosynthesis; CDP-diacylglycerol from sn-glycerol 3-phosphate: step 3/3. This is Phosphatidate cytidylyltransferase (cdsA) from Mycobacterium bovis (strain ATCC BAA-935 / AF2122/97).